The primary structure comprises 147 residues: uncharacterized protein (147 aa).

Residues 52-145 (YDRCLLIIDA…WLSNNYPTVC (94 aa)) enclose the Rhodanese domain.

This is an uncharacterized protein from Buchnera aphidicola subsp. Baizongia pistaciae (strain Bp).